The following is a 449-amino-acid chain: Glutamate--tRNA ligase (449 aa).

The 'HIGH' region motif lies at 10 to 20 (PSPTGFLHIGN). The 'KMSKS' region signature appears at 214 to 218 (KLSKR). K217 serves as a coordination point for ATP.

It belongs to the class-I aminoacyl-tRNA synthetase family. Glutamate--tRNA ligase type 1 subfamily. In terms of assembly, monomer.

The protein localises to the cytoplasm. It catalyses the reaction tRNA(Glu) + L-glutamate + ATP = L-glutamyl-tRNA(Glu) + AMP + diphosphate. Functionally, catalyzes the attachment of glutamate to tRNA(Glu) in a two-step reaction: glutamate is first activated by ATP to form Glu-AMP and then transferred to the acceptor end of tRNA(Glu). The sequence is that of Glutamate--tRNA ligase from Onion yellows phytoplasma (strain OY-M).